A 205-amino-acid polypeptide reads, in one-letter code: Holliday junction branch migration complex subunit RuvA (205 aa).

The domain I stretch occupies residues 1–64 (MIGKLKGVVD…EDMIRLYGFR (64 aa)). The domain II stretch occupies residues 65-143 (SDAEREWFRL…AFAPVDPALV (79 aa)). A flexible linker region spans residues 144–152 (ALAGAVEEG). Positions 153–205 (AAPQPVADAVSALVNLGYPQVQAAAAIAAALKGAGEGAEAKVLIRLGLRELAR) are domain III.

Belongs to the RuvA family. In terms of assembly, homotetramer. Forms an RuvA(8)-RuvB(12)-Holliday junction (HJ) complex. HJ DNA is sandwiched between 2 RuvA tetramers; dsDNA enters through RuvA and exits via RuvB. An RuvB hexamer assembles on each DNA strand where it exits the tetramer. Each RuvB hexamer is contacted by two RuvA subunits (via domain III) on 2 adjacent RuvB subunits; this complex drives branch migration. In the full resolvosome a probable DNA-RuvA(4)-RuvB(12)-RuvC(2) complex forms which resolves the HJ.

Its subcellular location is the cytoplasm. In terms of biological role, the RuvA-RuvB-RuvC complex processes Holliday junction (HJ) DNA during genetic recombination and DNA repair, while the RuvA-RuvB complex plays an important role in the rescue of blocked DNA replication forks via replication fork reversal (RFR). RuvA specifically binds to HJ cruciform DNA, conferring on it an open structure. The RuvB hexamer acts as an ATP-dependent pump, pulling dsDNA into and through the RuvAB complex. HJ branch migration allows RuvC to scan DNA until it finds its consensus sequence, where it cleaves and resolves the cruciform DNA. The chain is Holliday junction branch migration complex subunit RuvA from Methylobacterium radiotolerans (strain ATCC 27329 / DSM 1819 / JCM 2831 / NBRC 15690 / NCIMB 10815 / 0-1).